Here is a 386-residue protein sequence, read N- to C-terminus: Diaminopimelate decarboxylase (386 aa).

An N6-(pyridoxal phosphate)lysine modification is found at Lys-46. Pyridoxal 5'-phosphate is bound by residues Gly-214 and 246–249; that span reads EIGR. Substrate is bound by residues Arg-249, Arg-285, and Tyr-289. Catalysis depends on Cys-314, which acts as the Proton donor. 2 residues coordinate substrate: Glu-315 and Tyr-343. Tyr-343 is a pyridoxal 5'-phosphate binding site.

This sequence belongs to the Orn/Lys/Arg decarboxylase class-II family. LysA subfamily. Homodimer. Pyridoxal 5'-phosphate is required as a cofactor.

The catalysed reaction is meso-2,6-diaminopimelate + H(+) = L-lysine + CO2. It functions in the pathway amino-acid biosynthesis; L-lysine biosynthesis via DAP pathway; L-lysine from DL-2,6-diaminopimelate: step 1/1. Functionally, specifically catalyzes the decarboxylation of meso-diaminopimelate (meso-DAP) to L-lysine. In Thermotoga maritima (strain ATCC 43589 / DSM 3109 / JCM 10099 / NBRC 100826 / MSB8), this protein is Diaminopimelate decarboxylase.